An 80-amino-acid chain; its full sequence is Exodeoxyribonuclease 7 small subunit (80 aa).

This sequence belongs to the XseB family. In terms of assembly, heterooligomer composed of large and small subunits.

The protein resides in the cytoplasm. The enzyme catalyses Exonucleolytic cleavage in either 5'- to 3'- or 3'- to 5'-direction to yield nucleoside 5'-phosphates.. Its function is as follows. Bidirectionally degrades single-stranded DNA into large acid-insoluble oligonucleotides, which are then degraded further into small acid-soluble oligonucleotides. The polypeptide is Exodeoxyribonuclease 7 small subunit (Pseudomonas putida (strain ATCC 700007 / DSM 6899 / JCM 31910 / BCRC 17059 / LMG 24140 / F1)).